A 465-amino-acid chain; its full sequence is MAMTGSTPCSSMSNHTKERVTMTKVTLENFYSNLIAQHEEREMRQKKLEKVMEEEGLKDEEKRLRRSAHARKETEFLRLKRTRLGLEDFESLKVIGRGAFGEVRLVQKKDTGHVYAMKILRKADMLEKEQVGHIRAERDILVEADSLWVVKMFYSFQDKLNLYLIMEFLPGGDMMTLLMKKDTLTEEETQFYIAETVLAIDSIHQLGFIHRDIKPDNLLLDSKGHVKLSDFGLCTGLKKAHRTEFYRNLNHSLPSDFTFQNMNSKRKAETWKRNRRQLAFSTVGTPDYIAPEVFMQTGYNKLCDWWSLGVIMYEMLIGYPPFCSETPQETYKKVMNWKETLTFPPEVPVSEKAKGLILRFCCEWEHRIGAPGVEEIKNNLFFEGVDWEHIRERPAAISIEIKSIDDTSNFDEFPESDILKPTVTTSSHPETDYKNKDWVFINYTYKRFEGLTARGAIPSYMKAAK.

Ala2 carries the N-acetylalanine modification. Residues 62 to 87 (KRLRRSAHARKETEFLRLKRTRLGLE) form an interaction with S100B region. Thr74 is modified (phosphothreonine). One can recognise a Protein kinase domain in the interval 89–382 (FESLKVIGRG…VEEIKNNLFF (294 aa)). ATP-binding positions include 95-103 (IGRGAFGEV) and Lys118. The active-site Proton acceptor is the Asp212. Ser264 carries the post-translational modification Phosphoserine. Ser281 carries the post-translational modification Phosphoserine; by autocatalysis. Positions 306–311 (WSLGVI) match the UFM1-interacting motif (UFIM) motif. The AGC-kinase C-terminal domain occupies 383 to 455 (EGVDWEHIRE…KRFEGLTARG (73 aa)). Thr444 bears the Phosphothreonine; by STK24/MST3 mark.

This sequence belongs to the protein kinase superfamily. AGC Ser/Thr protein kinase family. Homodimeric S100B binds two molecules of STK38. Interacts with MOB1 and MOB2. Interacts with MAP3K1 and MAP3K2 (via the kinase catalytic domain). Forms a tripartite complex with MOBKL1B and STK3/MST2. Interacts with MICAL1; leading to inhibit the protein kinase activity by antagonizing activation by MST1/STK4. The cofactor is Mg(2+). In terms of processing, ISGylated. Post-translationally, phosphorylated by STK3/MST2 and this is enhanced by MOBKL1B. As to expression, expressed at high levels in spleen, lung, thymus, brain and fat tissue.

The protein localises to the nucleus. Its subcellular location is the cytoplasm. The protein resides in the chromosome. It catalyses the reaction L-seryl-[protein] + ATP = O-phospho-L-seryl-[protein] + ADP + H(+). It carries out the reaction L-threonyl-[protein] + ATP = O-phospho-L-threonyl-[protein] + ADP + H(+). Activated by binding of S100B which releases autoinhibitory N-lobe interactions, enabling ATP to bind and the autophosphorylation of Ser-281. Thr-444 then undergoes calcium-dependent phosphorylation by STK24/MST3. Interactions between phosphorylated Thr-444 and the N-lobe promote additional structural changes that complete the activation of the kinase. Autoinhibition is also released by the binding of MOB1/MOBKL1A and MOB2/HCCA2 to the N-terminal of STK38. Its function is as follows. Serine/threonine-protein kinase that acts as a negative regulator of MAP3K1/2 signaling. Converts MAP3K2 from its phosphorylated form to its non-phosphorylated form and inhibits autophosphorylation of MAP3K2. Acts as an ufmylation 'reader' in a kinase-independent manner: specifically recognizes and binds mono-ufmylated histone H4 in response to DNA damage, promoting the recruitment of SUV39H1 to the double-strand breaks, resulting in ATM activation. The sequence is that of Serine/threonine-protein kinase 38 from Mus musculus (Mouse).